The primary structure comprises 394 residues: Zinc finger and SCAN domain-containing protein 9 (394 aa).

Lys-26 participates in a covalent cross-link: Glycyl lysine isopeptide (Lys-Gly) (interchain with G-Cter in SUMO2). One can recognise an SCAN box domain in the interval 52–134 (RRHFRQLCYQ…ILLEDLEREL (83 aa)). Residues Lys-215 and Lys-238 each participate in a glycyl lysine isopeptide (Lys-Gly) (interchain with G-Cter in SUMO2) cross-link. 5 consecutive C2H2-type zinc fingers follow at residues 254 to 276 (HKCD…QRIH), 282 to 304 (YECN…RGIH), 310 to 332 (YHCK…QRIH), 338 to 360 (YQCS…QRSH), and 366 to 388 (HQCI…QKIH).

The protein belongs to the krueppel C2H2-type zinc-finger protein family.

It is found in the nucleus. Its function is as follows. May be involved in transcriptional regulation. This chain is Zinc finger and SCAN domain-containing protein 9 (ZSCAN9), found in Homo sapiens (Human).